Here is a 298-residue protein sequence, read N- to C-terminus: Tyrosine recombinase XerC (298 aa).

Residues 1-84 (MNHIQEAFLN…TLRTFYEYWM (84 aa)) enclose the Core-binding (CB) domain. One can recognise a Tyr recombinase domain in the interval 105-286 (YLPQFFYEEE…SNQQLRKVYL (182 aa)). Catalysis depends on residues Arg-145, Lys-169, His-238, Arg-241, and His-264. Tyr-273 (O-(3'-phospho-DNA)-tyrosine intermediate) is an active-site residue.

This sequence belongs to the 'phage' integrase family. XerC subfamily. Forms a cyclic heterotetrameric complex composed of two molecules of XerC and two molecules of XerD.

It is found in the cytoplasm. Functionally, site-specific tyrosine recombinase, which acts by catalyzing the cutting and rejoining of the recombining DNA molecules. The XerC-XerD complex is essential to convert dimers of the bacterial chromosome into monomers to permit their segregation at cell division. It also contributes to the segregational stability of plasmids. The sequence is that of Tyrosine recombinase XerC from Staphylococcus aureus (strain bovine RF122 / ET3-1).